A 200-amino-acid chain; its full sequence is NADH-quinone oxidoreductase subunit C (200 aa).

It belongs to the complex I 30 kDa subunit family. NDH-1 is composed of 14 different subunits. Subunits NuoB, C, D, E, F, and G constitute the peripheral sector of the complex.

It is found in the cell inner membrane. The catalysed reaction is a quinone + NADH + 5 H(+)(in) = a quinol + NAD(+) + 4 H(+)(out). Its function is as follows. NDH-1 shuttles electrons from NADH, via FMN and iron-sulfur (Fe-S) centers, to quinones in the respiratory chain. The immediate electron acceptor for the enzyme in this species is believed to be ubiquinone. Couples the redox reaction to proton translocation (for every two electrons transferred, four hydrogen ions are translocated across the cytoplasmic membrane), and thus conserves the redox energy in a proton gradient. This is NADH-quinone oxidoreductase subunit C from Parvibaculum lavamentivorans (strain DS-1 / DSM 13023 / NCIMB 13966).